Here is a 200-residue protein sequence, read N- to C-terminus: Ribonuclease HII (200 aa).

The region spanning 11–200 (QSIAGVDEVG…VRRALISLTG (190 aa)) is the RNase H type-2 domain. 3 residues coordinate a divalent metal cation: Asp-17, Glu-18, and Asp-109.

The protein belongs to the RNase HII family. Mn(2+) serves as cofactor. Mg(2+) is required as a cofactor.

Its subcellular location is the cytoplasm. The enzyme catalyses Endonucleolytic cleavage to 5'-phosphomonoester.. Endonuclease that specifically degrades the RNA of RNA-DNA hybrids. This is Ribonuclease HII from Hamiltonella defensa subsp. Acyrthosiphon pisum (strain 5AT).